Consider the following 400-residue polypeptide: Phosphoglycerate kinase (400 aa).

Substrate is bound by residues 22 to 24 (DFN), Arg-38, 61 to 64 (HLGR), Arg-119, and Arg-152. Residues Lys-205, Gly-296, Glu-327, and 353–356 (GGDT) contribute to the ATP site.

It belongs to the phosphoglycerate kinase family. As to quaternary structure, monomer.

The protein localises to the cytoplasm. It catalyses the reaction (2R)-3-phosphoglycerate + ATP = (2R)-3-phospho-glyceroyl phosphate + ADP. Its pathway is carbohydrate degradation; glycolysis; pyruvate from D-glyceraldehyde 3-phosphate: step 2/5. This Campylobacter jejuni subsp. doylei (strain ATCC BAA-1458 / RM4099 / 269.97) protein is Phosphoglycerate kinase.